Here is a 238-residue protein sequence, read N- to C-terminus: Calmodulin-binding protein 25 (238 aa).

Positions 68-78 are enriched in polar residues; that stretch reads STNTLSSTVSG. Residues 68–87 form a disordered region; the sequence is STNTLSSTVSGASDPEIIGG. The Bipartite nuclear localization signal motif lies at 92-108; sequence KRNCLLTDGKAAKRRAR. The short motif at 125–134 is the VQ element; the sequence is FRQMVQQVTG. A disordered region spans residues 201 to 220; the sequence is SSVGLPSGKPSATADPGGSA.

Interacts with calmodulin (CaM). Interacts with WRKY25 and WRKY51. As to expression, expressed in leaves, flowers and siliques.

The protein localises to the nucleus. Its function is as follows. Calmodulin-binding protein that functions as a negative regulator of osmotic stress tolerance. This chain is Calmodulin-binding protein 25, found in Arabidopsis thaliana (Mouse-ear cress).